A 670-amino-acid chain; its full sequence is DNA ligase (670 aa).

NAD(+) contacts are provided by residues 33–37 (DAEYD), 82–83 (SL), and Glu-114. Catalysis depends on Lys-116, which acts as the N6-AMP-lysine intermediate. 4 residues coordinate NAD(+): Arg-137, Glu-173, Lys-291, and Lys-315. Residues Cys-409, Cys-412, Cys-427, and Cys-433 each coordinate Zn(2+). In terms of domain architecture, BRCT spans 592-670 (VQSDRLSGNT…ENALAELLSD (79 aa)).

The protein belongs to the NAD-dependent DNA ligase family. LigA subfamily. Mg(2+) serves as cofactor. Requires Mn(2+) as cofactor.

The catalysed reaction is NAD(+) + (deoxyribonucleotide)n-3'-hydroxyl + 5'-phospho-(deoxyribonucleotide)m = (deoxyribonucleotide)n+m + AMP + beta-nicotinamide D-nucleotide.. DNA ligase that catalyzes the formation of phosphodiester linkages between 5'-phosphoryl and 3'-hydroxyl groups in double-stranded DNA using NAD as a coenzyme and as the energy source for the reaction. It is essential for DNA replication and repair of damaged DNA. The chain is DNA ligase from Idiomarina loihiensis (strain ATCC BAA-735 / DSM 15497 / L2-TR).